A 154-amino-acid polypeptide reads, in one-letter code: Large ribosomal subunit protein bL9 (154 aa).

It belongs to the bacterial ribosomal protein bL9 family.

Binds to the 23S rRNA. The protein is Large ribosomal subunit protein bL9 of Buchnera aphidicola subsp. Baizongia pistaciae (strain Bp).